Reading from the N-terminus, the 91-residue chain is Small ribosomal subunit protein uS19m (91 aa).

Belongs to the universal ribosomal protein uS19 family. Component of the mitochondrial small ribosomal subunit (mt-SSU). Mature N.crassa 74S mitochondrial ribosomes consist of a small (37S) and a large (54S) subunit. The 37S small subunit contains a 16S ribosomal RNA (16S mt-rRNA) and 32 different proteins. The 54S large subunit contains a 23S rRNA (23S mt-rRNA) and 42 different proteins.

It localises to the mitochondrion. Component of the mitochondrial ribosome (mitoribosome), a dedicated translation machinery responsible for the synthesis of mitochondrial genome-encoded proteins, including at least some of the essential transmembrane subunits of the mitochondrial respiratory chain. The mitoribosomes are attached to the mitochondrial inner membrane and translation products are cotranslationally integrated into the membrane. This is Small ribosomal subunit protein uS19m (rsm19) from Neurospora crassa (strain ATCC 24698 / 74-OR23-1A / CBS 708.71 / DSM 1257 / FGSC 987).